The following is a 631-amino-acid chain: tRNA uridine 5-carboxymethylaminomethyl modification enzyme MnmG (631 aa).

15–20 (GAGHAG) provides a ligand contact to FAD. The disordered stretch occupies residues 214-233 (YSKTEEEPGDKEPRHFSFTS). 276–290 (GPRYCPSIETKVVRF) is an NAD(+) binding site.

Belongs to the MnmG family. As to quaternary structure, homodimer. Heterotetramer of two MnmE and two MnmG subunits. FAD serves as cofactor.

It localises to the cytoplasm. Its function is as follows. NAD-binding protein involved in the addition of a carboxymethylaminomethyl (cmnm) group at the wobble position (U34) of certain tRNAs, forming tRNA-cmnm(5)s(2)U34. The protein is tRNA uridine 5-carboxymethylaminomethyl modification enzyme MnmG of Lactobacillus delbrueckii subsp. bulgaricus (strain ATCC BAA-365 / Lb-18).